The sequence spans 206 residues: ATP phosphoribosyltransferase (206 aa).

This sequence belongs to the ATP phosphoribosyltransferase family. Short subfamily. Heteromultimer composed of HisG and HisZ subunits.

It is found in the cytoplasm. It carries out the reaction 1-(5-phospho-beta-D-ribosyl)-ATP + diphosphate = 5-phospho-alpha-D-ribose 1-diphosphate + ATP. It functions in the pathway amino-acid biosynthesis; L-histidine biosynthesis; L-histidine from 5-phospho-alpha-D-ribose 1-diphosphate: step 1/9. Its function is as follows. Catalyzes the condensation of ATP and 5-phosphoribose 1-diphosphate to form N'-(5'-phosphoribosyl)-ATP (PR-ATP). Has a crucial role in the pathway because the rate of histidine biosynthesis seems to be controlled primarily by regulation of HisG enzymatic activity. The chain is ATP phosphoribosyltransferase from Geobacillus sp. (strain WCH70).